The sequence spans 115 residues: Large ribosomal subunit protein bL19 (115 aa).

This sequence belongs to the bacterial ribosomal protein bL19 family.

This protein is located at the 30S-50S ribosomal subunit interface and may play a role in the structure and function of the aminoacyl-tRNA binding site. The polypeptide is Large ribosomal subunit protein bL19 (Pectobacterium carotovorum subsp. carotovorum (strain PC1)).